Here is a 501-residue protein sequence, read N- to C-terminus: MAIRVPSRQLFIDGEWREPIKKNRIPIINPSTEEIIGDIPAATAEDVELAVAAARRALKRNKGEDWASASGAHRAKYLRAIAAKITEKKDYFAKLEAMDCGKPLDEAARDIDDVAGCFEYYADQAEALDAKQKAPIALPMDTFKCHVLKQPIGVVGLISPWNYPLLMATWKVAPALAAGCSAVLKPSELASVTCLELAEVCREVGLPPGVLNILTGLGPEAGGPLACHPDVDKVAFTGSTATGSKVMSSAAQLVKPVTLELGGKSPIVIFEDVDLDKAAEWTAFGCFWTNGQICSATSRLLVHESIAAEFLDRLVKWCKNIKISDPFEEGCRLGPVVSKSQYEKVLKFISTAKSEGATILCGGSRPEHLKKGYYVEPTIISDVSTSMQIWREEVFGPVLCQKTFGSEDEAIELANDTQYGLGAAVLSKDLDRCERITKALEVGAVWVNCSQPCFTQAPWGGTKRSGFGRELGEWGIENYLNIKQVTRDTSTDEPWGWYKSP.

A chloroplast-targeting transit peptide spans 1–7 (MAIRVPS). 238-243 (GSTATG) is an NAD(+) binding site. The active-site Proton acceptor is Glu260. Cys294 acts as the Nucleophile in catalysis.

The protein belongs to the aldehyde dehydrogenase family. Homodimer.

The protein resides in the plastid. It localises to the chloroplast. The catalysed reaction is betaine aldehyde + NAD(+) + H2O = glycine betaine + NADH + 2 H(+). It participates in amine and polyamine biosynthesis; betaine biosynthesis via choline pathway; betaine from betaine aldehyde: step 1/1. The sequence is that of Betaine aldehyde dehydrogenase, chloroplastic (BADH4) from Amaranthus hypochondriacus (Prince-of-Wales feather).